A 297-amino-acid chain; its full sequence is Nucleotide-binding protein DSY4845 (297 aa).

13–20 is an ATP binding site; that stretch reads GLSGAGKT. 64–67 is a GTP binding site; sequence DLRG.

This sequence belongs to the RapZ-like family.

In terms of biological role, displays ATPase and GTPase activities. The protein is Nucleotide-binding protein DSY4845 of Desulfitobacterium hafniense (strain Y51).